An 80-amino-acid chain; its full sequence is Exodeoxyribonuclease 7 small subunit (80 aa).

It belongs to the XseB family. In terms of assembly, heterooligomer composed of large and small subunits.

It localises to the cytoplasm. It catalyses the reaction Exonucleolytic cleavage in either 5'- to 3'- or 3'- to 5'-direction to yield nucleoside 5'-phosphates.. Its function is as follows. Bidirectionally degrades single-stranded DNA into large acid-insoluble oligonucleotides, which are then degraded further into small acid-soluble oligonucleotides. The protein is Exodeoxyribonuclease 7 small subunit of Caulobacter sp. (strain K31).